A 137-amino-acid chain; its full sequence is Putative pre-16S rRNA nuclease (137 aa).

This sequence belongs to the YqgF nuclease family.

Its subcellular location is the cytoplasm. In terms of biological role, could be a nuclease involved in processing of the 5'-end of pre-16S rRNA. In Bacillus cereus (strain AH187), this protein is Putative pre-16S rRNA nuclease.